Consider the following 433-residue polypeptide: GTPase Der (433 aa).

2 EngA-type G domains span residues 3-167 (NRVV…KEEK) and 175-347 (IKVA…KDYT). Residues 9–16 (GRPNVGKS), 56–60 (DTGGL), 119–122 (NKID), 181–188 (GRPNVGKS), 228–232 (DTAGV), and 293–296 (NKMD) contribute to the GTP site. Positions 348 to 432 (KQHKTSFVNR…PIKLVIKGRE (85 aa)) constitute a KH-like domain.

It belongs to the TRAFAC class TrmE-Era-EngA-EngB-Septin-like GTPase superfamily. EngA (Der) GTPase family. In terms of assembly, associates with the 50S ribosomal subunit.

Its function is as follows. GTPase that plays an essential role in the late steps of ribosome biogenesis. The polypeptide is GTPase Der (Aquifex aeolicus (strain VF5)).